Here is a 265-residue protein sequence, read N- to C-terminus: Ribosomal RNA large subunit methyltransferase E (265 aa).

Residues Gly-83, Trp-85, Asp-106, Asp-122, and Asp-146 each contribute to the S-adenosyl-L-methionine site. The Proton acceptor role is filled by Lys-186. Positions 230-265 are disordered; the sequence is KGREAGPPSGGSERPVDVSKDLSARSDSEGPGDAEG. Over residues 243–257 the composition is skewed to basic and acidic residues; that stretch reads RPVDVSKDLSARSDS.

It belongs to the class I-like SAM-binding methyltransferase superfamily. RNA methyltransferase RlmE family.

It localises to the cytoplasm. The catalysed reaction is uridine(2552) in 23S rRNA + S-adenosyl-L-methionine = 2'-O-methyluridine(2552) in 23S rRNA + S-adenosyl-L-homocysteine + H(+). In terms of biological role, specifically methylates the uridine in position 2552 of 23S rRNA at the 2'-O position of the ribose in the fully assembled 50S ribosomal subunit. This chain is Ribosomal RNA large subunit methyltransferase E, found in Mesorhizobium japonicum (strain LMG 29417 / CECT 9101 / MAFF 303099) (Mesorhizobium loti (strain MAFF 303099)).